A 729-amino-acid chain; its full sequence is Rho GTPase-activating protein 28 (729 aa).

Residues 1 to 78 (MEVEDSGGVV…ASVDSSASME (78 aa)) are disordered. Basic residues predominate over residues 37–49 (LSRKSIPRCRRIN). Residues 63–76 (SRSNSQASVDSSAS) are compositionally biased toward low complexity. A Phosphoserine modification is found at Ser-70. Thr-164 carries the phosphothreonine modification. The tract at residues 180–234 (FGVSESPPSDSCEHATQLDGTKEEKDLPGVTKTSRPLPDDASLSSTTLSNGAQDE) is disordered. Over residues 221 to 231 (SLSSTTLSNGA) the composition is skewed to polar residues. The 198-residue stretch at 384 to 581 (VPLTVLLDND…LMLKYQKILW (198 aa)) folds into the Rho-GAP domain.

Functionally, GTPase activator for the Rho-type GTPases by converting them to an inactive GDP-bound state. The protein is Rho GTPase-activating protein 28 (Arhgap28) of Mus musculus (Mouse).